We begin with the raw amino-acid sequence, 291 residues long: Acetyl-coenzyme A carboxylase carboxyl transferase subunit beta (291 aa).

Positions 23-291 (VWHKCPSCTA…PPDLPVEESV (269 aa)) constitute a CoA carboxyltransferase N-terminal domain. Residues Cys27, Cys30, Cys46, and Cys49 each coordinate Zn(2+). The segment at 27–49 (CPSCTAVLYRVELERNLEVCPKC) adopts a C4-type zinc-finger fold.

This sequence belongs to the AccD/PCCB family. Acetyl-CoA carboxylase is a heterohexamer composed of biotin carboxyl carrier protein (AccB), biotin carboxylase (AccC) and two subunits each of ACCase subunit alpha (AccA) and ACCase subunit beta (AccD). Requires Zn(2+) as cofactor.

The protein resides in the cytoplasm. The catalysed reaction is N(6)-carboxybiotinyl-L-lysyl-[protein] + acetyl-CoA = N(6)-biotinyl-L-lysyl-[protein] + malonyl-CoA. It functions in the pathway lipid metabolism; malonyl-CoA biosynthesis; malonyl-CoA from acetyl-CoA: step 1/1. In terms of biological role, component of the acetyl coenzyme A carboxylase (ACC) complex. Biotin carboxylase (BC) catalyzes the carboxylation of biotin on its carrier protein (BCCP) and then the CO(2) group is transferred by the transcarboxylase to acetyl-CoA to form malonyl-CoA. This is Acetyl-coenzyme A carboxylase carboxyl transferase subunit beta from Coxiella burnetii (strain Dugway 5J108-111).